The sequence spans 75 residues: Putative antitoxin VapB29 (75 aa).

Possibly the antitoxic component of a type II toxin-antitoxin (TA) system. Its cognate toxin is VapC29 (Potential). The polypeptide is Putative antitoxin VapB29 (vapB29) (Mycobacterium tuberculosis (strain CDC 1551 / Oshkosh)).